Consider the following 399-residue polypeptide: MSERVILAYSGGLDTSVAISWIGKETGKEVVAVAIDLGQGGEDMEVVRQRALDCGAVEAVVVDARDEFAEEYCLPTIQSNALYMDRYPLVSAISRPLIVKHLVKAAREHGGGVVAHGCTGKGNDQVRFEVGFASLAPDLQVLAPVRDYAWTREKAIAFAEENAIPINVTKRSPFSIDQNVWGRAVETGFLEHLWNAPTKDVYDYTEDPTVHWNTPDEVVIGFDKGVPVSIDGRPVSVLQAIEELNRRAGAQGVGRLDVVEDRLVGIKSREIYEAPGAMVLITAHTELEHVTLERELGRFKRHTDQKWGELVYDGLWYSPLKRALESFVAHTQEHVSGEIRLVLHGGHISVNGRRSAESLYDFNLATYDEGDSFDQSAAKGFVHLHGLSSRISAKRDLGI.

Residue 8–16 (AYSGGLDTS) participates in ATP binding. Y87 contributes to the L-citrulline binding site. G117 provides a ligand contact to ATP. The L-aspartate site is built by T119, N123, and D124. L-citrulline is bound at residue N123. Residues R127, S175, E260, and Y272 each coordinate L-citrulline.

It belongs to the argininosuccinate synthase family. Type 1 subfamily. Homotetramer.

It is found in the cytoplasm. The catalysed reaction is L-citrulline + L-aspartate + ATP = 2-(N(omega)-L-arginino)succinate + AMP + diphosphate + H(+). The protein operates within amino-acid biosynthesis; L-arginine biosynthesis; L-arginine from L-ornithine and carbamoyl phosphate: step 2/3. The polypeptide is Argininosuccinate synthase (Mycolicibacterium smegmatis (strain ATCC 700084 / mc(2)155) (Mycobacterium smegmatis)).